Here is a 1181-residue protein sequence, read N- to C-terminus: Clustered mitochondria protein homolog (1181 aa).

Residues 165–195 (AKAEALAKNEEVSEDEESEPEDDTPMKQSTQ) form a disordered region. Residues 176–187 (VSEDEESEPEDD) are compositionally biased toward acidic residues. A Clu domain is found at 379 to 622 (DMARNQELLS…RLAPVDIAFL (244 aa)). The segment at 1130–1181 (GRLARQAPKPTATHQKEAPKKASKKTKGKGKGKDDKGEKLVAELKKKKAGKR) is disordered. Basic residues predominate over residues 1150 to 1159 (KASKKTKGKG). A compositionally biased stretch (basic and acidic residues) spans 1160–1173 (KGKDDKGEKLVAEL).

The protein belongs to the CLU family. As to quaternary structure, may associate with the eukaryotic translation initiation factor 3 (eIF-3) complex.

Its subcellular location is the cytoplasm. Functionally, mRNA-binding protein involved in proper cytoplasmic distribution of mitochondria. In Yarrowia lipolytica (strain CLIB 122 / E 150) (Yeast), this protein is Clustered mitochondria protein homolog.